The chain runs to 526 residues: Catalase (526 aa).

Over residues 1–22 the composition is skewed to basic and acidic residues; sequence MADDREKSTDQMKLWKEGRGSQ. A disordered region spans residues 1–29; the sequence is MADDREKSTDQMKLWKEGRGSQRPDVLTT. Catalysis depends on residues H75 and N148. NADP(+)-binding residues include H194, S201, R203, N213, K237, W303, H305, and K306. Y358 serves as a coordination point for heme.

Belongs to the catalase family. Homotetramer. It depends on heme as a cofactor. NADP(+) serves as cofactor.

Its subcellular location is the peroxisome matrix. The catalysed reaction is 2 H2O2 = O2 + 2 H2O. In terms of biological role, catalyzes the degradation of hydrogen peroxide (H(2)O(2)) generated by peroxisomal oxidases to water and oxygen, thereby protecting cells from the toxic effects of hydrogen peroxide. The protein is Catalase (cat) of Danio rerio (Zebrafish).